Reading from the N-terminus, the 261-residue chain is Cytochrome c oxidase subunit 3 (261 aa).

The Mitochondrial matrix portion of the chain corresponds to 1–15 (MTHQTHAYHMVNPSP). Residues 16 to 34 (WPLTGALSALLMTSGLTMW) form a helical membrane-spanning segment. Residues 35–40 (FHFNST) lie on the Mitochondrial intermembrane side of the membrane. The chain crosses the membrane as a helical span at residues 41 to 66 (ILLMLGLTTNMLTMYQWWRDIIREST). The Mitochondrial matrix segment spans residues 67 to 72 (FQGHHT). Residues 73–105 (PVVQKGLRYGMILFIISEVLFFTGFFWAFYHSS) traverse the membrane as a helical segment. Residues 106 to 128 (LAPTPELGGCWPPTGIHPLNPLE) lie on the Mitochondrial intermembrane side of the membrane. Residues 129-152 (VPLLNTSVLLASGVSITWAHHSLM) traverse the membrane as a helical segment. Residues 153–155 (EGH) lie on the Mitochondrial matrix side of the membrane. Residues 156–183 (RNHMLQALFITIALGVYFTLLQASEYYE) form a helical membrane-spanning segment. At 184–190 (APFTISD) the chain is on the mitochondrial intermembrane side. A helical membrane pass occupies residues 191–223 (GVYGSTFFVATGFHGLHVIIGSTFLIVCFFRQL). The Mitochondrial matrix segment spans residues 224–232 (KFHFTSSHH). The helical transmembrane segment at 233–256 (FGFEAAAWYWHFVDVVWLFLYVSI) threads the bilayer. At 257–261 (YWWGS) the chain is on the mitochondrial intermembrane side.

This sequence belongs to the cytochrome c oxidase subunit 3 family. As to quaternary structure, component of the cytochrome c oxidase (complex IV, CIV), a multisubunit enzyme composed of 14 subunits. The complex is composed of a catalytic core of 3 subunits MT-CO1, MT-CO2 and MT-CO3, encoded in the mitochondrial DNA, and 11 supernumerary subunits COX4I, COX5A, COX5B, COX6A, COX6B, COX6C, COX7A, COX7B, COX7C, COX8 and NDUFA4, which are encoded in the nuclear genome. The complex exists as a monomer or a dimer and forms supercomplexes (SCs) in the inner mitochondrial membrane with NADH-ubiquinone oxidoreductase (complex I, CI) and ubiquinol-cytochrome c oxidoreductase (cytochrome b-c1 complex, complex III, CIII), resulting in different assemblies (supercomplex SCI(1)III(2)IV(1) and megacomplex MCI(2)III(2)IV(2)).

The protein resides in the mitochondrion inner membrane. The enzyme catalyses 4 Fe(II)-[cytochrome c] + O2 + 8 H(+)(in) = 4 Fe(III)-[cytochrome c] + 2 H2O + 4 H(+)(out). Its function is as follows. Component of the cytochrome c oxidase, the last enzyme in the mitochondrial electron transport chain which drives oxidative phosphorylation. The respiratory chain contains 3 multisubunit complexes succinate dehydrogenase (complex II, CII), ubiquinol-cytochrome c oxidoreductase (cytochrome b-c1 complex, complex III, CIII) and cytochrome c oxidase (complex IV, CIV), that cooperate to transfer electrons derived from NADH and succinate to molecular oxygen, creating an electrochemical gradient over the inner membrane that drives transmembrane transport and the ATP synthase. Cytochrome c oxidase is the component of the respiratory chain that catalyzes the reduction of oxygen to water. Electrons originating from reduced cytochrome c in the intermembrane space (IMS) are transferred via the dinuclear copper A center (CU(A)) of subunit 2 and heme A of subunit 1 to the active site in subunit 1, a binuclear center (BNC) formed by heme A3 and copper B (CU(B)). The BNC reduces molecular oxygen to 2 water molecules using 4 electrons from cytochrome c in the IMS and 4 protons from the mitochondrial matrix. The polypeptide is Cytochrome c oxidase subunit 3 (MT-CO3) (Tragelaphus strepsiceros (Greater kudu)).